We begin with the raw amino-acid sequence, 177 residues long: uncharacterized protein (177 aa).

2 stretches are compositionally biased toward low complexity: residues 78-93 (NNNNNNNNTINNNTNN) and 120-130 (SDVNSNNNNGN). The interval 78-146 (NNNNNNNNTI…NKKLKKDGTN (69 aa)) is disordered. Over residues 131-146 (HQKKKINKKLKKDGTN) the composition is skewed to basic residues.

This is an uncharacterized protein from Dictyostelium discoideum (Social amoeba).